The chain runs to 911 residues: SH3 and PX domain-containing protein 2B (911 aa).

In terms of domain architecture, PX spans 5-129 (RSIVEVKVLD…QFFETRPEDL (125 aa)). Position 25 is a phosphotyrosine (Y25). SH3 domains are found at residues 152 to 211 (MVLE…GQDG) and 221 to 280 (EEEE…KNSG). The interval 275–366 (LKKNSGEPLP…GLNLPKPPIP (92 aa)) is disordered. S279 and S291 each carry phosphoserine. The segment covering 282-292 (PLPPKPGPGSP) has biased composition (pro residues). A compositionally biased stretch (basic and acidic residues) spans 311-337 (GREKELLSSQRDGRFEGRPVPDGDAKQ). The segment covering 338 to 347 (RSPKMRQRPP) has biased composition (basic residues). The SH3 3 domain maps to 368 to 427 (QVEEEYYTIAEFQTTIPDGISFQAGLKVEVIEKNLSGWWYIQIEDKEGWAPATFIDKYKK). A disordered region spans residues 458-834 (NTGSEATGPS…GPWGTGKIGE (377 aa)). 5 stretches are compositionally biased toward basic and acidic residues: residues 486-499 (KDWK…RKAS), 517-548 (EEKP…RTEQ), 571-586 (PARD…DKSR), 598-609 (CGHKVLAKEVKK), and 618-628 (SKTDLPEEKPD). A phosphoserine mark is found at S499 and S528. Pro residues-rich tracts occupy residues 643–653 (RPKPAPSPKTE) and 756–766 (VVPPRRPPPPK). Residues 822–831 (GSLGPWGTGK) are compositionally biased toward gly residues. A Phosphoserine modification is found at S843. The SH3 4 domain maps to 850–911 (LKDSLYVAVA…IPSNYLRKKP (62 aa)).

Belongs to the SH3PXD2 family. Interacts with ADAM15. Interacts with NOXO1. Interacts (via SH3 domains) with NOXA1; the interaction is direct. Interacts with FASLG. In terms of processing, phosphorylated in SRC-transformed cells. Expressed in fibroblasts.

It localises to the cytoplasm. The protein localises to the cell projection. The protein resides in the podosome. Adapter protein involved in invadopodia and podosome formation and extracellular matrix degradation. Binds matrix metalloproteinases (ADAMs), NADPH oxidases (NOXs) and phosphoinositides. Acts as an organizer protein that allows NOX1- or NOX3-dependent reactive oxygen species (ROS) generation and ROS localization. Plays a role in mitotic clonal expansion during the immediate early stage of adipocyte differentiation. This chain is SH3 and PX domain-containing protein 2B (SH3PXD2B), found in Homo sapiens (Human).